Reading from the N-terminus, the 219-residue chain is Transmembrane protein 179B (219 aa).

The next 4 helical transmembrane spans lie at Val9–Thr29, Phe65–Val85, Ile98–Ala118, and Leu162–Leu182. Ser206 is subject to Phosphoserine.

This sequence belongs to the TMEM179 family.

It localises to the membrane. This is Transmembrane protein 179B (Tmem179b) from Mus musculus (Mouse).